Reading from the N-terminus, the 1025-residue chain is Beta-galactosidase (1025 aa).

Residue glutamate 482 is the Proton donor of the active site. Glutamate 551 functions as the Nucleophile in the catalytic mechanism.

The protein belongs to the glycosyl hydrolase 2 family.

The catalysed reaction is Hydrolysis of terminal non-reducing beta-D-galactose residues in beta-D-galactosides.. This Kluyveromyces lactis (strain ATCC 8585 / CBS 2359 / DSM 70799 / NBRC 1267 / NRRL Y-1140 / WM37) (Yeast) protein is Beta-galactosidase (LAC4).